Here is a 310-residue protein sequence, read N- to C-terminus: Probable deoxyhypusine synthase (310 aa).

Catalysis depends on Lys284, which acts as the Nucleophile.

The protein belongs to the deoxyhypusine synthase family. Requires NAD(+) as cofactor.

The catalysed reaction is [eIF5A protein]-L-lysine + spermidine = [eIF5A protein]-deoxyhypusine + propane-1,3-diamine. The protein operates within protein modification; eIF5A hypusination. In terms of biological role, catalyzes the NAD-dependent oxidative cleavage of spermidine and the subsequent transfer of the butylamine moiety of spermidine to the epsilon-amino group of a specific lysine residue of the eIF-5A precursor protein to form the intermediate deoxyhypusine residue. This is Probable deoxyhypusine synthase (dys) from Thermoplasma acidophilum (strain ATCC 25905 / DSM 1728 / JCM 9062 / NBRC 15155 / AMRC-C165).